The primary structure comprises 366 residues: UPF0324 membrane protein RSc1111 (366 aa).

A run of 8 helical transmembrane segments spans residues 21-43 (LAGA…TAWA), 103-125 (LGAS…GAWV), 137-159 (AVLV…APAV), 169-191 (AIAS…YALA), 198-220 (VAPA…VIAA), 240-262 (VLAL…LVLE), 283-305 (WFAA…ATWH), and 343-365 (AGVL…RWLA).

It belongs to the UPF0324 family.

The protein resides in the cell membrane. The protein is UPF0324 membrane protein RSc1111 of Ralstonia nicotianae (strain ATCC BAA-1114 / GMI1000) (Ralstonia solanacearum).